The primary structure comprises 343 residues: Flap endonuclease 1 (343 aa).

Residues 1–98 form an N-domain region; it reads MGVPIGELIP…KELEKRREAR (98 aa). Mg(2+)-binding residues include D27, D80, E152, E154, D173, D175, and D236. An I-domain region spans residues 116 to 258; the sequence is EARKYAQRAT…KALEIVKYSK (143 aa). An interaction with PCNA region spans residues 330 to 338; it reads KQSTLESWF.

The protein belongs to the XPG/RAD2 endonuclease family. FEN1 subfamily. As to quaternary structure, interacts with PCNA. PCNA stimulates the nuclease activity without altering cleavage specificity. It depends on Mg(2+) as a cofactor.

Functionally, structure-specific nuclease with 5'-flap endonuclease and 5'-3' exonuclease activities involved in DNA replication and repair. During DNA replication, cleaves the 5'-overhanging flap structure that is generated by displacement synthesis when DNA polymerase encounters the 5'-end of a downstream Okazaki fragment. Binds the unpaired 3'-DNA end and kinks the DNA to facilitate 5' cleavage specificity. Cleaves one nucleotide into the double-stranded DNA from the junction in flap DNA, leaving a nick for ligation. Also involved in the base excision repair (BER) pathway. Acts as a genome stabilization factor that prevents flaps from equilibrating into structures that lead to duplications and deletions. Also possesses 5'-3' exonuclease activity on nicked or gapped double-stranded DNA. This chain is Flap endonuclease 1, found in Pyrococcus abyssi (strain GE5 / Orsay).